The following is a 195-amino-acid chain: Large ribosomal subunit protein uL11m (195 aa).

Belongs to the universal ribosomal protein uL11 family. In terms of assembly, component of the mitochondrial ribosome large subunit (39S) which comprises a 16S rRNA and about 50 distinct proteins.

The protein localises to the mitochondrion. This Caenorhabditis elegans protein is Large ribosomal subunit protein uL11m (mrpl-11).